We begin with the raw amino-acid sequence, 152 residues long: Deoxyuridine 5'-triphosphate nucleotidohydrolase (152 aa).

Residues 71–73 (RSG), Asn84, 88–90 (LID), and Met98 contribute to the substrate site.

This sequence belongs to the dUTPase family. Mg(2+) is required as a cofactor.

It catalyses the reaction dUTP + H2O = dUMP + diphosphate + H(+). It participates in pyrimidine metabolism; dUMP biosynthesis; dUMP from dCTP (dUTP route): step 2/2. Its function is as follows. This enzyme is involved in nucleotide metabolism: it produces dUMP, the immediate precursor of thymidine nucleotides and it decreases the intracellular concentration of dUTP so that uracil cannot be incorporated into DNA. This is Deoxyuridine 5'-triphosphate nucleotidohydrolase from Photorhabdus laumondii subsp. laumondii (strain DSM 15139 / CIP 105565 / TT01) (Photorhabdus luminescens subsp. laumondii).